Reading from the N-terminus, the 171-residue chain is UPF0398 protein STER_0279 (171 aa).

This sequence belongs to the UPF0398 family.

This is UPF0398 protein STER_0279 from Streptococcus thermophilus (strain ATCC BAA-491 / LMD-9).